Consider the following 510-residue polypeptide: MSEKSRSDTSATASLSDSSKSPSSYSTPGTTTQKIIFPDGKLTKCLAFSAFVITLASFQFGYHIGCVNAPGGLITEWIIGSHKDLFDKELSRENADLAWSVAVSVFAVGGMIGGLSSGWLADKVGRRGALFYNNLLALAAAALMGLAKSVGAYPMVILGRLIIGLNCGFSSALVPMFLTEISPNNLRGMLGSLHQLLVTIAILVSQIFGLPHLLGTGDRWPLIFAFTVVPAVLQLALLMLCPESPKYTMAVRGQRNEAESALKKLRDTEDVSTEIEAMQEEATAAGVQEKPKMGDMFKGALLWPMSIAIMMMLAQQLSGINVAMFYSTVIFRGAGLTGNEPFYATIGMGAVNVIMTLISVWLVDHPKFGRRSLLLAGLTGMFVSTLLLVGALTIQNSGGDKWASYSAIGFVLLFVISFATGPGAIPWFFVSEIFDSSARGNANSIAVMVNWAANLLVGLTFLPINNLMQQYSFFIFSGFLAFFIFYTWKFVPETKGKSIEQIQAEFEKRK.

Residues 1–29 (MSEKSRSDTSATASLSDSSKSPSSYSTPG) form a disordered region. At 1 to 46 (MSEKSRSDTSATASLSDSSKSPSSYSTPGTTTQKIIFPDGKLTKCL) the chain is on the cytoplasmic side. Positions 8-29 (DTSATASLSDSSKSPSSYSTPG) are enriched in low complexity. A helical membrane pass occupies residues 47 to 67 (AFSAFVITLASFQFGYHIGCV). Over 68-100 (NAPGGLITEWIIGSHKDLFDKELSRENADLAWS) the chain is Extracellular. Residues 101-121 (VAVSVFAVGGMIGGLSSGWLA) form a helical membrane-spanning segment. The Cytoplasmic segment spans residues 122-127 (DKVGRR). A helical membrane pass occupies residues 128–146 (GALFYNNLLALAAAALMGL). Residues 147-160 (AKSVGAYPMVILGR) lie on the Extracellular side of the membrane. Residues 161–181 (LIIGLNCGFSSALVPMFLTEI) traverse the membrane as a helical segment. Residues 182–195 (SPNNLRGMLGSLHQ) lie on the Cytoplasmic side of the membrane. Q195 lines the D-glucose pocket. Residues 196-216 (LLVTIAILVSQIFGLPHLLGT) traverse the membrane as a helical segment. At 217 to 219 (GDR) the chain is on the extracellular side. The chain crosses the membrane as a helical span at residues 220–240 (WPLIFAFTVVPAVLQLALLML). The Cytoplasmic segment spans residues 241–299 (CPESPKYTMAVRGQRNEAESALKKLRDTEDVSTEIEAMQEEATAAGVQEKPKMGDMFKG). Residues 300–320 (ALLWPMSIAIMMMLAQQLSGI) form a helical membrane-spanning segment. D-glucose contacts are provided by residues 315-316 (QQ), N321, and N352. At 321–341 (NVAMFYSTVIFRGAGLTGNEP) the chain is on the extracellular side. A helical membrane pass occupies residues 342–362 (FYATIGMGAVNVIMTLISVWL). At 363–373 (VDHPKFGRRSL) the chain is on the cytoplasmic side. A helical membrane pass occupies residues 374–394 (LLAGLTGMFVSTLLLVGALTI). Topologically, residues 395–409 (QNSGGDKWASYSAIG) are extracellular. The chain crosses the membrane as a helical span at residues 410–430 (FVLLFVISFATGPGAIPWFFV). W427 contacts D-glucose. Residues 431–445 (SEIFDSSARGNANSI) lie on the Cytoplasmic side of the membrane. The chain crosses the membrane as a helical span at residues 446–464 (AVMVNWAANLLVGLTFLPI). The Extracellular segment spans residues 465 to 470 (NNLMQQ). The helical transmembrane segment at 471 to 491 (YSFFIFSGFLAFFIFYTWKFV) threads the bilayer. The Cytoplasmic segment spans residues 492–510 (PETKGKSIEQIQAEFEKRK).

The protein belongs to the major facilitator superfamily. Sugar transporter (TC 2.A.1.1) family. Glucose transporter subfamily. As to expression, isoform a is expressed in pharyngeal muscle and intestinal cells in both embryos and adults (at protein level).

The protein resides in the cell membrane. It localises to the basolateral cell membrane. Its function is as follows. Facilitative glucose transporter that plays a role in glucose metabolism and regulation of longevity. May also play a role in lipid metabolism. Glucose transport activity of isoform a is competitively inhibited by mannose, galactose and fructose, suggesting ability to transport also other hexose sugars. This chain is Facilitated glucose transporter protein 1, found in Caenorhabditis elegans.